A 495-amino-acid chain; its full sequence is Glutamyl-tRNA(Gln) amidotransferase subunit A (495 aa).

Active-site charge relay system residues include K78 and S158. The active-site Acyl-ester intermediate is the S182.

The protein belongs to the amidase family. GatA subfamily. In terms of assembly, heterotrimer of A, B and C subunits.

It catalyses the reaction L-glutamyl-tRNA(Gln) + L-glutamine + ATP + H2O = L-glutaminyl-tRNA(Gln) + L-glutamate + ADP + phosphate + H(+). Its function is as follows. Allows the formation of correctly charged Gln-tRNA(Gln) through the transamidation of misacylated Glu-tRNA(Gln) in organisms which lack glutaminyl-tRNA synthetase. The reaction takes place in the presence of glutamine and ATP through an activated gamma-phospho-Glu-tRNA(Gln). The polypeptide is Glutamyl-tRNA(Gln) amidotransferase subunit A (Ruegeria sp. (strain TM1040) (Silicibacter sp.)).